The following is a 65-amino-acid chain: Large ribosomal subunit protein uL30 (65 aa).

The protein belongs to the universal ribosomal protein uL30 family. As to quaternary structure, part of the 50S ribosomal subunit.

In Brucella suis (strain ATCC 23445 / NCTC 10510), this protein is Large ribosomal subunit protein uL30.